An 88-amino-acid polypeptide reads, in one-letter code: Small ribosomal subunit protein uS17 (88 aa).

This sequence belongs to the universal ribosomal protein uS17 family. Part of the 30S ribosomal subunit.

One of the primary rRNA binding proteins, it binds specifically to the 5'-end of 16S ribosomal RNA. This is Small ribosomal subunit protein uS17 from Ligilactobacillus salivarius (strain UCC118) (Lactobacillus salivarius).